We begin with the raw amino-acid sequence, 101 residues long: Protein Tat (101 aa).

The tract at residues Met-1–Asn-24 is interaction with human CREBBP. Positions Met-1 to Gly-48 are transactivation. 3 residues coordinate Zn(2+): Cys-22, Cys-25, and Cys-27. The segment at Cys-22–Cys-37 is cysteine-rich. An N6-acetyllysine; by host PCAF modification is found at Lys-28. Cys-30, His-33, Cys-34, and Cys-37 together coordinate Zn(2+). The core stretch occupies residues Phe-38–Gly-48. Basic residues predominate over residues Gly-48 to Arg-57. The segment at Gly-48 to His-101 is disordered. The Nuclear localization signal, RNA-binding (TAR), and protein transduction signature appears at Arg-49–Arg-57. The segment at Arg-49 to Glu-86 is interaction with the host capping enzyme RNGTT. 2 positions are modified to N6-acetyllysine; by host EP300 and GCN5L2: Lys-50 and Lys-51. Asymmetric dimethylarginine; by host PRMT6 is present on residues Arg-52 and Arg-53. Residue Lys-71 forms a Glycyl lysine isopeptide (Lys-Gly) (interchain with G-Cter in ubiquitin) linkage. The span at Gly-83–His-101 shows a compositional bias: basic and acidic residues.

The protein belongs to the lentiviruses Tat family. In terms of assembly, interacts with host CCNT1. Associates with the P-TEFb complex composed at least of Tat, P-TEFb (CDK9 and CCNT1), TAR RNA, RNA Pol II. Recruits the HATs CREBBP, TAF1/TFIID, EP300, PCAF and GCN5L2. Interacts with host KAT5/Tip60; this interaction targets the latter to degradation. Interacts with the host deacetylase SIRT1. Interacts with host capping enzyme RNGTT; this interaction stimulates RNGTT. Binds to host KDR, and to the host integrins ITGAV/ITGB3 and ITGA5/ITGB1. Interacts with host KPNB1/importin beta-1 without previous binding to KPNA1/importin alpha-1. Interacts with EIF2AK2. Interacts with host nucleosome assembly protein NAP1L1; this interaction may be required for the transport of Tat within the nucleus, since the two proteins interact at the nuclear rim. Interacts with host C1QBP/SF2P32; this interaction involves lysine-acetylated Tat. Interacts with the host chemokine receptors CCR2, CCR3 and CXCR4. Interacts with host DPP4/CD26; this interaction may trigger an anti-proliferative effect. Interacts with host LDLR. Interacts with the host extracellular matrix metalloproteinase MMP1. Interacts with host PRMT6; this interaction mediates Tat's methylation. Interacts with, and is ubiquitinated by MDM2/Hdm2. Interacts with host PSMC3 and HTATIP2. Interacts with STAB1; this interaction may overcome SATB1-mediated repression of IL2 and IL2RA (interleukin) in T cells by binding to the same domain than HDAC1. Interacts (when acetylated) with human CDK13, thereby increasing HIV-1 mRNA splicing and promoting the production of the doubly spliced HIV-1 protein Nef. Interacts with host TBP; this interaction modulates the activity of transcriptional pre-initiation complex. Interacts with host RELA. Interacts with host PLSCR1; this interaction negatively regulates Tat transactivation activity by altering its subcellular distribution. In terms of processing, asymmetrical arginine methylation by host PRMT6 seems to diminish the transactivation capacity of Tat and affects the interaction with host CCNT1. Post-translationally, acetylation by EP300, CREBBP, GCN5L2/GCN5 and PCAF regulates the transactivation activity of Tat. EP300-mediated acetylation of Lys-50 promotes dissociation of Tat from the TAR RNA through the competitive binding to PCAF's bromodomain. In addition, the non-acetylated Tat's N-terminus can also interact with PCAF. PCAF-mediated acetylation of Lys-28 enhances Tat's binding to CCNT1. Lys-50 is deacetylated by SIRT1. Polyubiquitination by host MDM2 does not target Tat to degradation, but activates its transactivation function and fosters interaction with CCNT1 and TAR RNA. In terms of processing, phosphorylated by EIF2AK2 on serine and threonine residues adjacent to the basic region important for TAR RNA binding and function. Phosphorylation of Tat by EIF2AK2 is dependent on the prior activation of EIF2AK2 by dsRNA.

Its subcellular location is the host nucleus. It localises to the host nucleolus. It is found in the host cytoplasm. The protein resides in the secreted. Transcriptional activator that increases RNA Pol II processivity, thereby increasing the level of full-length viral transcripts. Recognizes a hairpin structure at the 5'-LTR of the nascent viral mRNAs referred to as the transactivation responsive RNA element (TAR) and recruits the cyclin T1-CDK9 complex (P-TEFb complex) that will in turn hyperphosphorylate the RNA polymerase II to allow efficient elongation. The CDK9 component of P-TEFb and other Tat-activated kinases hyperphosphorylate the C-terminus of RNA Pol II that becomes stabilized and much more processive. Other factors such as HTATSF1/Tat-SF1, SUPT5H/SPT5, and HTATIP2 are also important for Tat's function. Besides its effect on RNA Pol II processivity, Tat induces chromatin remodeling of proviral genes by recruiting the histone acetyltransferases (HATs) CREBBP, EP300 and PCAF to the chromatin. This also contributes to the increase in proviral transcription rate, especially when the provirus integrates in transcriptionally silent region of the host genome. To ensure maximal activation of the LTR, Tat mediates nuclear translocation of NF-kappa-B by interacting with host RELA. Through its interaction with host TBP, Tat may also modulate transcription initiation. Tat can reactivate a latently infected cell by penetrating in it and transactivating its LTR promoter. In the cytoplasm, Tat is thought to act as a translational activator of HIV-1 mRNAs. Its function is as follows. Extracellular circulating Tat can be endocytosed by surrounding uninfected cells via the binding to several surface receptors such as CD26, CXCR4, heparan sulfate proteoglycans (HSPG) or LDLR. Neurons are rarely infected, but they internalize Tat via their LDLR. Through its interaction with nuclear HATs, Tat is potentially able to control the acetylation-dependent cellular gene expression. Modulates the expression of many cellular genes involved in cell survival, proliferation or in coding for cytokines or cytokine receptors. Tat plays a role in T-cell and neurons apoptosis. Tat induced neurotoxicity and apoptosis probably contribute to neuroAIDS. Circulating Tat also acts as a chemokine-like and/or growth factor-like molecule that binds to specific receptors on the surface of the cells, affecting many cellular pathways. In the vascular system, Tat binds to ITGAV/ITGB3 and ITGA5/ITGB1 integrins dimers at the surface of endothelial cells and competes with bFGF for heparin-binding sites, leading to an excess of soluble bFGF. The sequence is that of Protein Tat from Human immunodeficiency virus type 1 group M subtype B (isolate SF162) (HIV-1).